Here is a 71-residue protein sequence, read N- to C-terminus: Plasticin-C1 (71 aa).

A signal peptide spans 1–22; the sequence is MAFLKKSLLLVLFLGLVSLSIC. Residues 23-45 constitute a propeptide that is removed on maturation; sequence EEEKRENEDEEKQEDDDQSENKR. The tract at residues 25–46 is disordered; it reads EKRENEDEEKQEDDDQSENKRG. Residues 30–40 are compositionally biased toward acidic residues; it reads EDEEKQEDDDQ. Asparagine 68 is subject to Asparagine amide. Positions 70–71 are excised as a propeptide; it reads ES.

The protein belongs to the frog skin active peptide (FSAP) family. Plasticin subfamily. Expressed by the skin glands.

It is found in the secreted. It localises to the target cell membrane. In terms of biological role, neutral peptide with no antimicrobial activity. May act in synergy with cationic peptides by enhancing their activity. Has a moderate hemolytic activity. The sequence is that of Plasticin-C1 from Agalychnis callidryas (Red-eyed tree frog).